We begin with the raw amino-acid sequence, 812 residues long: Protein let-653 (812 aa).

The first 21 residues, 1–21 (MRHPLISLLLLIAFYSTSSEA), serve as a signal peptide directing secretion. Apple domains follow at residues 26-116 (CNSF…WKYC) and 123-209 (CSGE…ENNC). Disulfide bonds link Cys-26–Cys-116, Cys-53–Cys-88, Cys-57–Cys-72, Cys-123–Cys-209, Cys-154–Cys-178, and Cys-158–Cys-166. N-linked (GlcNAc...) asparagine glycans are attached at residues Asn-172, Asn-211, and Asn-272. In terms of domain architecture, ZP spans 221 to 725 (ECRDNGISVS…NTCDDVEGCD (505 aa)). Composition is skewed to low complexity over residues 375–449 (QVTT…STTT) and 496–584 (PTTT…PASS). 2 disordered regions span residues 375–461 (QVTT…STIM) and 494–584 (DVPT…PASS). An N-linked (GlcNAc...) asparagine glycan is attached at Asn-771.

Post-translationally, cleaved at the C-terminal domain. In terms of tissue distribution, expressed in external cuticle-producing epithelial cells including the epidermis, vulva, rectum, excretory duct and excretory pore.

The protein localises to the apical cell membrane. The protein resides in the secreted. Its subcellular location is the extracellular space. Functionally, required for epithelial tube development and shaping. Involved in the morphogenesis and function of the three unicellular tubes of the excretory system, the canal cell, the duct cell and the pore cell. Also plays a role in cuticle development, alae formation and shaping of the vulval lumen. Required for larval development. The chain is Protein let-653 from Caenorhabditis elegans.